The chain runs to 193 residues: Holliday junction branch migration complex subunit RuvA (193 aa).

Positions M1 to G64 are domain I. The interval T65–P143 is domain II. The tract at residues A144–D151 is flexible linker. The segment at D151–A193 is domain III.

The protein belongs to the RuvA family. In terms of assembly, homotetramer. Forms an RuvA(8)-RuvB(12)-Holliday junction (HJ) complex. HJ DNA is sandwiched between 2 RuvA tetramers; dsDNA enters through RuvA and exits via RuvB. An RuvB hexamer assembles on each DNA strand where it exits the tetramer. Each RuvB hexamer is contacted by two RuvA subunits (via domain III) on 2 adjacent RuvB subunits; this complex drives branch migration. In the full resolvosome a probable DNA-RuvA(4)-RuvB(12)-RuvC(2) complex forms which resolves the HJ.

Its subcellular location is the cytoplasm. In terms of biological role, the RuvA-RuvB-RuvC complex processes Holliday junction (HJ) DNA during genetic recombination and DNA repair, while the RuvA-RuvB complex plays an important role in the rescue of blocked DNA replication forks via replication fork reversal (RFR). RuvA specifically binds to HJ cruciform DNA, conferring on it an open structure. The RuvB hexamer acts as an ATP-dependent pump, pulling dsDNA into and through the RuvAB complex. HJ branch migration allows RuvC to scan DNA until it finds its consensus sequence, where it cleaves and resolves the cruciform DNA. The chain is Holliday junction branch migration complex subunit RuvA from Cupriavidus necator (strain ATCC 17699 / DSM 428 / KCTC 22496 / NCIMB 10442 / H16 / Stanier 337) (Ralstonia eutropha).